The chain runs to 1393 residues: DNA-directed RNA polymerase subunit beta' (1393 aa).

4 residues coordinate Zn(2+): C72, C74, C87, and C90. Residues D463, D465, and D467 each coordinate Mg(2+). Zn(2+)-binding residues include C812, C887, C894, and C897.

It belongs to the RNA polymerase beta' chain family. The RNAP catalytic core consists of 2 alpha, 1 beta, 1 beta' and 1 omega subunit. When a sigma factor is associated with the core the holoenzyme is formed, which can initiate transcription. Mg(2+) is required as a cofactor. It depends on Zn(2+) as a cofactor.

It catalyses the reaction RNA(n) + a ribonucleoside 5'-triphosphate = RNA(n+1) + diphosphate. Functionally, DNA-dependent RNA polymerase catalyzes the transcription of DNA into RNA using the four ribonucleoside triphosphates as substrates. The polypeptide is DNA-directed RNA polymerase subunit beta' (Chlamydia pneumoniae (Chlamydophila pneumoniae)).